Here is a 449-residue protein sequence, read N- to C-terminus: Heterogeneous nuclear ribonucleoprotein H2 (449 aa).

At M1 the chain carries N-acetylmethionine. Position 2 is an N-acetylmethionine; in Heterogeneous nuclear ribonucleoprotein H2, N-terminally processed (M2). In terms of domain architecture, RRM 1 spans F11–S90. The residue at position 23 (S23) is a Phosphoserine. Residue K35 forms a Glycyl lysine isopeptide (Lys-Gly) (interchain with G-Cter in SUMO2) linkage. Phosphoserine occurs at positions 54 and 63. K87 is covalently cross-linked (Glycyl lysine isopeptide (Lys-Gly) (interchain with G-Cter in SUMO2)). Position 90 is a phosphoserine (S90). K98 participates in a covalent cross-link: Glycyl lysine isopeptide (Lys-Gly) (interchain with G-Cter in SUMO2). One can recognise an RRM 2 domain in the interval G111–R188. The residue at position 233 (R233) is a Dimethylated arginine; alternate. The residue at position 233 (R233) is an Omega-N-methylarginine; alternate. Residues G234–Y249 form a 1-1 repeat. The 2 X 16 AA Gly-rich approximate repeats stretch occupies residues G234–Y433. The residue at position 246 (Y246) is a Phosphotyrosine. Residues H289–T364 enclose the RRM 3 domain. The residue at position 310 (S310) is a Phosphoserine. 3 consecutive repeat copies span residues H354–Y372, H374–Y392, and G418–Y433. The 2 X 19 AA perfect repeats stretch occupies residues H354–Y392.

Component of a ribonucleoprotein complex containing mRNAs and RNA-binding proteins including DDX5, HNRNPH2 and SRSF1 as well as splicing regulator ARVCF. Interacts with TXNL4/DIM1.

It is found in the nucleus. The protein localises to the nucleoplasm. Functionally, this protein is a component of the heterogeneous nuclear ribonucleoprotein (hnRNP) complexes which provide the substrate for the processing events that pre-mRNAs undergo before becoming functional, translatable mRNAs in the cytoplasm. Binds poly(RG). The protein is Heterogeneous nuclear ribonucleoprotein H2 (Hnrnph2) of Mus musculus (Mouse).